The chain runs to 420 residues: Acetyl-CoA acetyltransferase B, mitochondrial (420 aa).

A mitochondrion-targeting transit peptide spans 1-33 (MAFCGPRTAARLSHSTRALHYTHRSFASPRTLN). The active-site Acyl-thioester intermediate is the Cys-119. Residues Tyr-212, 251 to 253 (RVD), and Lys-256 each bind CoA. K(+) is bound at residue Tyr-212. K(+)-binding residues include Ala-273 and Ala-274. Ser-277 serves as a coordination point for CoA. Position 374 (Val-374) interacts with K(+). Residue Cys-406 is the Proton donor/acceptor of the active site.

Belongs to the thiolase-like superfamily. Thiolase family. In terms of assembly, homotetramer.

It is found in the mitochondrion. The catalysed reaction is 2 acetyl-CoA = acetoacetyl-CoA + CoA. It catalyses the reaction propanoyl-CoA + acetyl-CoA = 2-methyl-3-oxobutanoyl-CoA + CoA. The protein operates within lipid metabolism; fatty acid beta-oxidation. Its function is as follows. This is one of the enzymes that catalyzes the last step of the mitochondrial beta-oxidation pathway, an aerobic process breaking down fatty acids into acetyl-CoA. Using free coenzyme A/CoA, catalyzes the thiolytic cleavage of medium- to long-chain 3-oxoacyl-CoAs into acetyl-CoA and a fatty acyl-CoA shortened by two carbon atoms. The activity of the enzyme is reversible and it can also catalyze the condensation of two acetyl-CoA molecules into acetoacetyl-CoA. Thereby, it plays a major role in ketone body metabolism. The sequence is that of Acetyl-CoA acetyltransferase B, mitochondrial (acat1-b) from Xenopus laevis (African clawed frog).